The primary structure comprises 191 residues: Elongation factor P (191 aa).

Residue lysine 34 is modified to N6-(3,6-diaminohexanoyl)-5-hydroxylysine.

Belongs to the elongation factor P family. May be beta-lysylated on the epsilon-amino group of Lys-34 by the combined action of EpmA and EpmB, and then hydroxylated on the C5 position of the same residue by EpmC (if this protein is present). Lysylation is critical for the stimulatory effect of EF-P on peptide-bond formation. The lysylation moiety may extend toward the peptidyltransferase center and stabilize the terminal 3-CCA end of the tRNA. Hydroxylation of the C5 position on Lys-34 may allow additional potential stabilizing hydrogen-bond interactions with the P-tRNA.

The protein localises to the cytoplasm. It functions in the pathway protein biosynthesis; polypeptide chain elongation. Functionally, involved in peptide bond synthesis. Alleviates ribosome stalling that occurs when 3 or more consecutive Pro residues or the sequence PPG is present in a protein, possibly by augmenting the peptidyl transferase activity of the ribosome. Modification of Lys-34 is required for alleviation. The polypeptide is Elongation factor P (Colwellia psychrerythraea (strain 34H / ATCC BAA-681) (Vibrio psychroerythus)).